A 524-amino-acid chain; its full sequence is RNA-directed RNA polymerase (524 aa).

Positions 220–340 (QSIAQIDFSS…NFETALCRQE (121 aa)) constitute a RdRp catalytic domain.

The catalysed reaction is RNA(n) + a ribonucleoside 5'-triphosphate = RNA(n+1) + diphosphate. Its function is as follows. RNA-dependent RNA polymerase which replicates the viral genome. The protein is RNA-directed RNA polymerase of Cryptosporidium parvum.